The sequence spans 284 residues: Tropomyosin-1 (284 aa).

Residues 1 to 284 are a coiled coil; the sequence is MDGIKKKMIA…DQTFAELTGY (284 aa). Positions 111-131 are disordered; that stretch reads TKLEEASKTAEESERGRKDLE.

Belongs to the tropomyosin family. As to quaternary structure, homodimer.

In terms of biological role, tropomyosin, in association with the troponin complex, plays a central role in the calcium dependent regulation of muscle contraction. In Schistosoma mansoni (Blood fluke), this protein is Tropomyosin-1.